A 491-amino-acid polypeptide reads, in one-letter code: Cobyric acid synthase (491 aa).

One can recognise a GATase cobBQ-type domain in the interval 253–429 (ARRVAVIRLP…WHGALEGDEL (177 aa)). The Nucleophile role is filled by Cys334. Residue His421 is part of the active site.

The protein belongs to the CobB/CobQ family. CobQ subfamily.

It participates in cofactor biosynthesis; adenosylcobalamin biosynthesis. Functionally, catalyzes amidations at positions B, D, E, and G on adenosylcobyrinic A,C-diamide. NH(2) groups are provided by glutamine, and one molecule of ATP is hydrogenolyzed for each amidation. The polypeptide is Cobyric acid synthase (Mycolicibacterium gilvum (strain PYR-GCK) (Mycobacterium gilvum (strain PYR-GCK))).